The sequence spans 747 residues: 3',5'-cyclic-AMP phosphodiesterase 4D (747 aa).

The disordered stretch occupies residues 1–28 (MERDTCDVLSRSKSASEETLHSCNEEED). The span at 14–24 (SASEETLHSCN) shows a compositional bias: basic and acidic residues. Phosphoserine is present on residues S238, S240, S287, and S314. A disordered region spans residues 282-302 (EVEIPSPTQKEKEKKKRPMSQ). The region spanning 325–654 (VKTEQEDVLA…EWYQSTIPQS (330 aa)) is the PDEase domain. K326 is covalently cross-linked (Glycyl lysine isopeptide (Lys-Gly) (interchain with G-Cter in SUMO)). H401 (proton donor) is an active-site residue. Position 401 (H401) interacts with 3',5'-cyclic AMP. H401 contributes to the AMP binding site. Residues H405, H441, D442, and D559 each coordinate Zn(2+). AMP contacts are provided by D442, D559, N562, Q610, and F613. D442 contributes to the Mg(2+) binding site. D442 is a Mn(2+) binding site. 3',5'-cyclic AMP-binding residues include Q610 and F613. Positions 649 to 747 (STIPQSPSPA…CVPDDCCPDT (99 aa)) are disordered. Polar residues predominate over residues 701-712 (CSDSKTLCTQDS). Residues 718–734 (PLDEQVEEEAVAEEESQ) show a composition bias toward acidic residues.

It belongs to the cyclic nucleotide phosphodiesterase family. PDE4 subfamily. In terms of assembly, homodimer for the long isoforms. Isoforms with truncated N-termini are monomeric. Binds ARRB2. Interacts with PDE4DIP. Identified in a complex composed of RYR1, PDE4D, PKA, FKBP1A and protein phosphatase 1 (PP1). Interacts (via N-terminal region) with SHANK2 (via proline-rich region); the interaction is increased in a PKA-dependent manner. It depends on Zn(2+) as a cofactor. Requires Mg(2+) as cofactor. Mn(2+) serves as cofactor. Post-translationally, sumoylation of long isoforms by PIAS4 augments their activation by PKA phosphorylation and represses their inhibition by ERK phosphorylation. Expressed in brain (at protein level). Isoform 7 is detected in heart, brain, lung, kidney and testis.

It is found in the cytoplasm. Its subcellular location is the membrane. The protein resides in the cytoskeleton. It localises to the microtubule organizing center. The protein localises to the centrosome. It is found in the apical cell membrane. The catalysed reaction is 3',5'-cyclic AMP + H2O = AMP + H(+). The protein operates within purine metabolism; 3',5'-cyclic AMP degradation; AMP from 3',5'-cyclic AMP: step 1/1. With respect to regulation, inhibited by rolipram. Activated by phosphatidic acid. Functionally, hydrolyzes the second messenger cAMP, which is a key regulator of many important physiological processes. This is 3',5'-cyclic-AMP phosphodiesterase 4D (Pde4d) from Mus musculus (Mouse).